A 327-amino-acid chain; its full sequence is Lipoyl synthase (327 aa).

[4Fe-4S] cluster contacts are provided by cysteine 75, cysteine 80, cysteine 86, cysteine 101, cysteine 105, cysteine 108, and serine 315. Residues 87–304 form the Radical SAM core domain; it reads FGNGTATFMI…EEEAYKMGFS (218 aa).

It belongs to the radical SAM superfamily. Lipoyl synthase family. [4Fe-4S] cluster is required as a cofactor.

It localises to the cytoplasm. It catalyses the reaction [[Fe-S] cluster scaffold protein carrying a second [4Fe-4S](2+) cluster] + N(6)-octanoyl-L-lysyl-[protein] + 2 oxidized [2Fe-2S]-[ferredoxin] + 2 S-adenosyl-L-methionine + 4 H(+) = [[Fe-S] cluster scaffold protein] + N(6)-[(R)-dihydrolipoyl]-L-lysyl-[protein] + 4 Fe(3+) + 2 hydrogen sulfide + 2 5'-deoxyadenosine + 2 L-methionine + 2 reduced [2Fe-2S]-[ferredoxin]. The protein operates within protein modification; protein lipoylation via endogenous pathway; protein N(6)-(lipoyl)lysine from octanoyl-[acyl-carrier-protein]: step 2/2. Its function is as follows. Catalyzes the radical-mediated insertion of two sulfur atoms into the C-6 and C-8 positions of the octanoyl moiety bound to the lipoyl domains of lipoate-dependent enzymes, thereby converting the octanoylated domains into lipoylated derivatives. This chain is Lipoyl synthase, found in Variovorax paradoxus (strain S110).